Reading from the N-terminus, the 306-residue chain is Tryptophan 2,3-dioxygenase (306 aa).

Residues 1–33 (MQPPGDDAAPRCPFAGAHAPDAPHVPEAAGDDA) form a disordered region. Residues 75 to 79 (FIIQH), Tyr-137, and Arg-141 contribute to the substrate site. His-264 provides a ligand contact to heme. Substrate is bound at residue Thr-278.

Belongs to the tryptophan 2,3-dioxygenase family. Homotetramer. Heme serves as cofactor.

It carries out the reaction L-tryptophan + O2 = N-formyl-L-kynurenine. It functions in the pathway amino-acid degradation; L-tryptophan degradation via kynurenine pathway; L-kynurenine from L-tryptophan: step 1/2. Functionally, heme-dependent dioxygenase that catalyzes the oxidative cleavage of the L-tryptophan (L-Trp) pyrrole ring and converts L-tryptophan to N-formyl-L-kynurenine. Catalyzes the oxidative cleavage of the indole moiety. The polypeptide is Tryptophan 2,3-dioxygenase (Burkholderia pseudomallei (strain 1106a)).